Reading from the N-terminus, the 98-residue chain is MEIKVTEIKENKLLGRKEIYFDVIHEGEPTPSRKDVKGKLVAMLDLDPETTVLQYIKSYFGSRVSKGYAKAYESKERMLYIEPEYILVRDGIITKEEE.

This sequence belongs to the eukaryotic ribosomal protein eS24 family.

This Thermococcus onnurineus (strain NA1) protein is Small ribosomal subunit protein eS24.